The chain runs to 151 residues: UPF0178 protein Caul_3070 (151 aa).

The protein belongs to the UPF0178 family.

The chain is UPF0178 protein Caul_3070 from Caulobacter sp. (strain K31).